A 369-amino-acid chain; its full sequence is UDP-3-O-acylglucosamine N-acyltransferase (369 aa).

His-263 serves as the catalytic Proton acceptor.

This sequence belongs to the transferase hexapeptide repeat family. LpxD subfamily. As to quaternary structure, homotrimer.

It catalyses the reaction a UDP-3-O-[(3R)-3-hydroxyacyl]-alpha-D-glucosamine + a (3R)-hydroxyacyl-[ACP] = a UDP-2-N,3-O-bis[(3R)-3-hydroxyacyl]-alpha-D-glucosamine + holo-[ACP] + H(+). It participates in bacterial outer membrane biogenesis; LPS lipid A biosynthesis. In terms of biological role, catalyzes the N-acylation of UDP-3-O-acylglucosamine using 3-hydroxyacyl-ACP as the acyl donor. Is involved in the biosynthesis of lipid A, a phosphorylated glycolipid that anchors the lipopolysaccharide to the outer membrane of the cell. This Burkholderia ambifaria (strain MC40-6) protein is UDP-3-O-acylglucosamine N-acyltransferase.